A 521-amino-acid chain; its full sequence is U4/U6 small nuclear ribonucleoprotein Prp4 (521 aa).

N6-acetyllysine is present on K26. WD repeat units lie at residues 229–268 (DDRPISYCHFSPNSKMLATACWSGLCKLWSVPDCNLLHTL), 271–318 (HNTN…VADI), 321–360 (HTVRVARVTWHPSGRFLGTTCYDRSWRLWDLEAQEEILHQ), 363–402 (HSMGVYDIAFHQDGSLAGTGGLDAFGRVWDLRTGRCIMFL), 405–444 (HLKEIYGINFSPNGYHIATGSGDNTCKVWDLRQRRCVYTI), 447–487 (HQNL…LKTL), and 490–521 (HEGKVMGLDISSDGQLIATCSYDRTFKLWMAE).

In terms of assembly, component of the precatalytic spliceosome (spliceosome B complex). Component of the U4/U6-U5 tri-snRNP complex, a building block of the precatalytic spliceosome (spliceosome B complex). The U4/U6-U5 tri-snRNP complex is composed of the U4, U6 and U5 snRNAs and at least PRPF3, PRPF4, PRPF6, PRPF8, PRPF31, SNRNP200, TXNL4A, SNRNP40, SNRPB, SNRPD1, SNRPD2, SNRPD3, SNRPE, SNRPF, SNRPG, DDX23, CD2BP2, PPIH, SNU13, EFTUD2, SART1 and USP39, plus LSM2, LSM3, LSM4, LSM5, LSM6, LSM7 and LSM8. Interacts directly with PRPF18, PPIH and PRPF3. Part of a heteromeric complex containing PPIH, PRPF3 and PRPF4 that is stable in the absence of RNA. Interacts with ERCC6.

Its subcellular location is the nucleus. The protein resides in the nucleus speckle. Plays a role in pre-mRNA splicing as component of the U4/U6-U5 tri-snRNP complex that is involved in spliceosome assembly, and as component of the precatalytic spliceosome (spliceosome B complex). The protein is U4/U6 small nuclear ribonucleoprotein Prp4 (PRPF4) of Bos taurus (Bovine).